The sequence spans 258 residues: MLLVMDMGNSHIHIGVFDGDRIVSQIRYATSSVDSTSDQMGVFLRQALRENSVDLGKIDGCGISSVVPHLNYSLGSAVIKYFNIKPFFISMDTTDLDMSAVEAHQVGADRIASCISAIADHPNKDLLIIDLGTATTFDLVTKDKKYLSGSIMPGVKLSLNALCQGASQLSSVTIVKPEVAIGYDTKTNIRSGLYYGHLGALKELKRRSVEEFGSPVYTIATGGFAGLFKEEDIFNEISPDLILRGIRIAFLENNKKGV.

6-13 (DMGNSHIH) contacts ATP. 107–110 (GADR) serves as a coordination point for substrate. The Proton acceptor role is filled by Asp-109. Position 130 (Asp-130) interacts with K(+). ATP is bound at residue Thr-133. Residue Thr-185 participates in substrate binding.

Belongs to the type III pantothenate kinase family. As to quaternary structure, homodimer. NH4(+) serves as cofactor. Requires K(+) as cofactor.

It is found in the cytoplasm. It carries out the reaction (R)-pantothenate + ATP = (R)-4'-phosphopantothenate + ADP + H(+). The protein operates within cofactor biosynthesis; coenzyme A biosynthesis; CoA from (R)-pantothenate: step 1/5. Functionally, catalyzes the phosphorylation of pantothenate (Pan), the first step in CoA biosynthesis. The polypeptide is Type III pantothenate kinase 1 (Francisella tularensis subsp. tularensis (strain FSC 198)).